A 349-amino-acid polypeptide reads, in one-letter code: Nicotinate-nucleotide--dimethylbenzimidazole phosphoribosyltransferase (349 aa).

The active-site Proton acceptor is the Glu-318.

This sequence belongs to the CobT family.

The enzyme catalyses 5,6-dimethylbenzimidazole + nicotinate beta-D-ribonucleotide = alpha-ribazole 5'-phosphate + nicotinate + H(+). The protein operates within nucleoside biosynthesis; alpha-ribazole biosynthesis; alpha-ribazole from 5,6-dimethylbenzimidazole: step 1/2. Catalyzes the synthesis of alpha-ribazole-5'-phosphate from nicotinate mononucleotide (NAMN) and 5,6-dimethylbenzimidazole (DMB). This chain is Nicotinate-nucleotide--dimethylbenzimidazole phosphoribosyltransferase, found in Geobacter sp. (strain M21).